A 443-amino-acid chain; its full sequence is Thymidine phosphorylase (443 aa).

The protein belongs to the thymidine/pyrimidine-nucleoside phosphorylase family. Homodimer.

The catalysed reaction is thymidine + phosphate = 2-deoxy-alpha-D-ribose 1-phosphate + thymine. The protein operates within pyrimidine metabolism; dTMP biosynthesis via salvage pathway; dTMP from thymine: step 1/2. Its function is as follows. The enzymes which catalyze the reversible phosphorolysis of pyrimidine nucleosides are involved in the degradation of these compounds and in their utilization as carbon and energy sources, or in the rescue of pyrimidine bases for nucleotide synthesis. This is Thymidine phosphorylase from Shewanella baltica (strain OS185).